A 110-amino-acid chain; its full sequence is MLPFKTLALFLLTAVAEIVGCYLPWLWLRQGRSAWLLVPAAASLALFAWLLTLHPAATGRVYAAYGGVYVAVALVWLWTVDGVRPGPWDWLGVSVTLCGMAIIAFAPRGG.

4 helical membrane passes run 7 to 27 (LALF…PWLW), 33 to 53 (SAWL…LLTL), 63 to 83 (AAYG…VDGV), and 86 to 106 (GPWD…IAFA).

The protein belongs to the UPF0060 family.

It is found in the cell inner membrane. The chain is UPF0060 membrane protein Dtpsy_1668 from Acidovorax ebreus (strain TPSY) (Diaphorobacter sp. (strain TPSY)).